The chain runs to 690 residues: Eukaryotic translation initiation factor 3 subunit B (690 aa).

A compositionally biased stretch (basic and acidic residues) spans 1-11 (MAKKKSEEHSS). Residues 1–33 (MAKKKSEEHSSADANDSDYQEEPNFDDPPNFVD) form a disordered region. The span at 15-25 (NDSDYQEEPNF) shows a compositional bias: acidic residues. One can recognise an RRM domain in the interval 57–141 (SVVVVDNIPK…HTFAVNLFTD (85 aa)). 5 WD repeats span residues 207-246 (TRER…KIQK), 293-331 (DGMS…LLDL), 334-369 (IKIP…TLME), 442-484 (EIRE…KPSL), and 530-575 (PDHF…IKRT). The stretch at 614 to 645 (QKDRLRLTRASKELLEKRSQLRETFMEYRNKR) forms a coiled coil.

It belongs to the eIF-3 subunit B family. Component of the eukaryotic translation initiation factor 3 (eIF-3) complex. The eIF-3 complex interacts with pix. Interacts with mxt.

Its subcellular location is the cytoplasm. In terms of biological role, RNA-binding component of the eukaryotic translation initiation factor 3 (eIF-3) complex, which is involved in protein synthesis of a specialized repertoire of mRNAs and, together with other initiation factors, stimulates binding of mRNA and methionyl-tRNAi to the 40S ribosome. The eIF-3 complex specifically targets and initiates translation of a subset of mRNAs involved in cell proliferation. This chain is Eukaryotic translation initiation factor 3 subunit B, found in Drosophila willistoni (Fruit fly).